Here is a 93-residue protein sequence, read N- to C-terminus: U12-lycotoxin-Ls1e (93 aa).

The signal sequence occupies residues 1–18 (MKFAVILLFTLVVLAVAS). The propeptide occupies 19–38 (ESVEEDTREIDVEEFQEQQR).

This sequence belongs to the neurotoxin 31 family. Post-translationally, contains 5 disulfide bonds. As to expression, expressed by the venom gland.

Its subcellular location is the secreted. The chain is U12-lycotoxin-Ls1e from Lycosa singoriensis (Wolf spider).